The sequence spans 117 residues: CUE domain-containing protein CUE4 (117 aa).

Residues 27 to 74 (QVPSRTVQDAKPAPSVATNDPSPEPVPSAPEERVARLNRHGSDRKRAV) are disordered. Lysine 37 is covalently cross-linked (Glycyl lysine isopeptide (Lys-Gly) (interchain with G-Cter in ubiquitin)). At serine 48 the chain carries Phosphoserine. A compositionally biased stretch (basic and acidic residues) spans 56 to 74 (PEERVARLNRHGSDRKRAV). Positions 74–116 (VNSDMVEIVMTMAPHVPQEKVVQDLRNTGSIEHTMENIFAGKL) constitute a CUE domain.

Ubiquitinated.

The protein resides in the cytoplasm. It is found in the endoplasmic reticulum. The sequence is that of CUE domain-containing protein CUE4 (CUE4) from Saccharomyces cerevisiae (strain ATCC 204508 / S288c) (Baker's yeast).